The primary structure comprises 512 residues: Glucose-1-phosphate adenylyltransferase small subunit 2, chloroplastic (512 aa).

Positions 1-21 are disordered; it reads MAAIGVLKVPPSSSSSSSSSS. The transit peptide at 1–63 directs the protein to the chloroplast; that stretch reads MAAIGVLKVP…RNPFIVSPKA (63 aa). Low complexity predominate over residues 12–21; the sequence is SSSSSSSSSS.

Belongs to the bacterial/plant glucose-1-phosphate adenylyltransferase family. Heterotetramer. Leaves and seeds.

Its subcellular location is the plastid. The protein resides in the chloroplast. The enzyme catalyses alpha-D-glucose 1-phosphate + ATP + H(+) = ADP-alpha-D-glucose + diphosphate. It functions in the pathway glycan biosynthesis; starch biosynthesis. With respect to regulation, activated by 3'phosphoglycerate, inhibited by orthophosphate. Allosteric regulation. This protein plays a role in synthesis of starch. It catalyzes the synthesis of the activated glycosyl donor, ADP-glucose from Glc-1-P and ATP. This chain is Glucose-1-phosphate adenylyltransferase small subunit 2, chloroplastic (AGPP), found in Vicia faba (Broad bean).